Reading from the N-terminus, the 73-residue chain is Long neurotoxin 2 (73 aa).

5 disulfides stabilise this stretch: C3–C21, C14–C42, C27–C31, C46–C57, and C58–C63.

Belongs to the three-finger toxin family. Long-chain subfamily. Type II alpha-neurotoxin sub-subfamily. In terms of tissue distribution, expressed by the venom gland.

The protein localises to the secreted. In terms of biological role, binds with high affinity to muscular (alpha-1/CHRNA1) and neuronal (alpha-7/CHRNA7) nicotinic acetylcholine receptor (nAChR) and inhibits acetylcholine from binding to the receptor, thereby impairing neuromuscular and neuronal transmission. This Ophiophagus hannah (King cobra) protein is Long neurotoxin 2.